The primary structure comprises 534 residues: MVLQDLGRRINAAVNDLTRSNNLDEKQAFDDMIKEICAALLSADVNVRLVQSLRKSIKSSVNFASLPPAVNKKRLIQKAVFDELVSLVDPHAEPFRPKKGRSNVIMFVGLQGAGKTTTCTKLARHYQMRGFKTALVCADTFRAGAFDQLKQNATKAKIPYYGSLTQTDPAIVAAEGVAKFKKERFEIIIVDTSGRHKQEEELFTEMTQIQTAVTPDQTILVLDSTIGQAAEAQSSAFKATADFGAIIITKTDGHAAGGGAISAVAATHTPIIYLGTGEHLMDLERFEPKAFIQKLLGMGDMAGLVEHVQAVTKDSASAKETYKHISEGIYTLRDFRENITSIMKMGPLSKLSGMIPGLSNLTAGLDDEDGSMKLRRMIYIFDSMTAAELDGDGKMFVEQPSRMVRIACGSGTTVREVEDLLSQHRMMAGMAKRVGGQKKQMQRAQNMLKGGNKEQQLAAMQKRMAAMGGAGGGGFPGMPGMGDMAKMMQMLQGQGGGGGGGLPGLGGMDLQSMMSQMSGLMGGGGGGGGRGRGR.

The G-domain stretch occupies residues 1–296 (MVLQDLGRRI…EPKAFIQKLL (296 aa)). GTP-binding positions include 109-116 (GLQGAGKT), 191-195 (DTSGR), and 249-252 (TKTD). The M-domain stretch occupies residues 297–534 (GMGDMAGLVE…GGGGGRGRGR (238 aa)).

Belongs to the GTP-binding SRP family. SRP54 subfamily. Fungal signal recognition particle consists of a 7S RNA molecule (scR1) and at least six protein subunits: srp72, srp68, srpA/srp54, sec65, srp21 and srp14.

The protein localises to the cytoplasm. The protein resides in the endoplasmic reticulum. The enzyme catalyses GTP + H2O = GDP + phosphate + H(+). In terms of biological role, signal-recognition-particle (SRP) assembly has a crucial role in targeting secretory proteins to the rough endoplasmic reticulum (ER) membrane. SRP is required for the cotranslational protein translocation for ER import and preferentially recognizes strongly hydrophobic signal sequences. It is involved in targeting the nascent chain-ribosome (RNC) complex to the ER and is proposed to participate in the arrest of nascent chain elongation during membrane targeting. srpA/srp54 binds to the signal sequence of presecretory protein when they emerge from the ribosomes. srpA/srp54 interacts with the scR1 RNA and mediates the association of the resulting SRP-RNC complex with the signal recognition particle receptor (SR) via its alpha subunit srp101. Both, srpA/srp54 and srp101, are locked in their GTP bound forms in the SRP-RNC-SR complex, which dissociates upon transferring the signal sequence to the protein-conducting channel (translocon). After signal sequence transfer, srpA/srp54 and srp101 act as reciprocal GTPase-activating proteins (GAPs), thereby resolving their association. This chain is Signal recognition particle subunit SRP54 (srpA), found in Aspergillus niger.